Reading from the N-terminus, the 696-residue chain is Caprolactamase subunit alpha (696 aa).

It belongs to the HyuA family. As to quaternary structure, the caprolactamase is a heterotetramer composed of two alpha subunits (CapA) and two beta subunits (CapB).

Activity is dependent on the presence of ATP and bicarbonate. The requirement for bicarbonate may be related to allosteric activation through conformational effects, but it is also conceivable that carboxyphosphate is formed and acts as a mediator in caprolactam activation, forming carboxy- or phospholactim. In terms of biological role, component of a caprolactamase involved in the degradation of caprolactam, an industrial compound mainly used in the production of Nylon 6. Catalyzes the ATP-dependent hydrolysis of the caprolactam ring to form 6-aminocaproic acid (6-ACA). The alpha subunit is responsible for ATP-dependent substrate phosphorylation. The enzyme cannot use 5-oxoproline. In Pseudomonas jessenii, this protein is Caprolactamase subunit alpha.